The sequence spans 251 residues: Uroporphyrinogen-III C-methyltransferase (251 aa).

S-adenosyl-L-homocysteine is bound by residues P17, 93–95 (GGD), 123–124 (TS), M177, and A206.

This sequence belongs to the precorrin methyltransferase family.

The protein localises to the plastid. It localises to the chloroplast. The catalysed reaction is uroporphyrinogen III + 2 S-adenosyl-L-methionine = precorrin-2 + 2 S-adenosyl-L-homocysteine + H(+). It participates in cofactor biosynthesis; adenosylcobalamin biosynthesis; precorrin-2 from uroporphyrinogen III: step 1/1. The protein operates within porphyrin-containing compound metabolism; siroheme biosynthesis; precorrin-2 from uroporphyrinogen III: step 1/1. Its function is as follows. Catalyzes the two successive C-2 and C-7 methylation reactions involved in the conversion of uroporphyrinogen III to precorrin-2 via the intermediate formation of precorrin-1. It is a step in the biosynthesis of both cobalamin (vitamin B12) and siroheme. The sequence is that of Uroporphyrinogen-III C-methyltransferase (cobA) from Cyanidium caldarium (Red alga).